Reading from the N-terminus, the 229-residue chain is Demethylmenaquinone methyltransferase (229 aa).

Residues T57, D77, and 101–102 (DV) each bind S-adenosyl-L-methionine.

This sequence belongs to the class I-like SAM-binding methyltransferase superfamily. MenG/UbiE family.

The enzyme catalyses a 2-demethylmenaquinol + S-adenosyl-L-methionine = a menaquinol + S-adenosyl-L-homocysteine + H(+). Its pathway is quinol/quinone metabolism; menaquinone biosynthesis; menaquinol from 1,4-dihydroxy-2-naphthoate: step 2/2. Its function is as follows. Methyltransferase required for the conversion of demethylmenaquinol (DMKH2) to menaquinol (MKH2). This chain is Demethylmenaquinone methyltransferase, found in Chlamydia muridarum (strain MoPn / Nigg).